Consider the following 265-residue polypeptide: Pre-protein VI (265 aa).

Residues 1–33 (MEDINFSSLAPRHGTRPYMGTWNEIGTSQLNGG) constitute a propeptide that is removed on maturation. Positions 34-54 (AFNWNSIWSGLKNFGSTIKTY) are amphipathic alpha-helix essential for membrane lytic activity. Positions 36–53 (NWNSIWSGLKNFGSTIKT) are involved in endosomal membrane lysis. Residues 48-74 (GSTIKTYGTKAWNSQTGQMLRDKLKDQ) form an interaction with hexon protein region. A Nuclear export signal motif is present at residues 67 to 76 (LRDKLKDQNF). Residues 123-155 (LETVPGSVPTKGEKRPRPDAEETLVTHTTEPPS) are disordered. Positions 133 to 142 (KGEKRPRPDA) are enriched in basic and acidic residues. The Nuclear localization signal signature appears at 136–140 (KRPRP). Threonine 148 bears the Phosphothreonine; by host mark. Residues 153–156 (PPSY) carry the PPXY motif motif. A Nuclear export signal motif is present at residues 246 to 257 (STLNSIVGLGVK). The interaction with hexon protein stretch occupies residues 248–254 (LNSIVGL). The segment at 255 to 265 (GVKSLKRRRCY) is binds to importin alpha/beta, involved in hexon nuclear import. A Nuclear localization signal motif is present at residues 260–263 (KRRR).

The protein belongs to the adenoviridae protein VI family. As to quaternary structure, interacts with hexon protein; this interaction allows nuclear import of hexon trimers and possibly pre-capsid assembly. Interacts (via C-terminal NLS) with importin alpha/beta. In terms of assembly, interacts (via PPxY motif) with host NEDD4 ubiquitine ligase; this interaction might play a role in virus intracellular transport during entry. Part of a complex composed of the core-capsid bridging protein, the endosome lysis protein VI and the hexon-linking protein VIII; these interactions bridge the virus core to the capsid. Interacts with peripentonal hexons; this interaction stabilizes the capsid by gluing two peripentonal hexons together and joining them with an adjacent group-of-nine hexon. Heterodimer with the viral protease; disulfide-linked. Interacts with the viral protease. In terms of processing, ubiquitinated by Nedd4 following partial capsid disassembly; which might play a role in intracellular virus movement during entry. Post-translationally, contains the major nuclear import and export signals. Proteolytically removed during virion maturation. The processing of the C-terminus turns the precursor into a mature viral structural protein and abrogates its ability to promote hexon import and act as a potential chaperone protein.

The protein resides in the host nucleus. It is found in the host cytoplasm. The protein localises to the virion. In terms of biological role, during virus assembly, promotes hexon trimers nuclear import through nuclear pore complexes via an importin alpha/beta-dependent mechanism. By analogy to herpesviruses capsid assembly, might act as a chaperone to promote the formation of the icosahedral capsid. Structural component of the virion that provides increased stability to the particle shell through its interaction with the core-capsid bridging protein and the hexon-linking protein VIII. Fibers shedding during virus entry into host cell allows the endosome lysis protein to be exposed as a membrane-lytic peptide. Exhibits pH-independent membrane fragmentation activity and probably mediates viral rapid escape from host endosome via organellar membrane lysis. It is not clear if it then remains partially associated with the capsid and involved in the intracellular microtubule-dependent transport of capsid to the nucleus, or if it is lost during endosomal penetration. Its function is as follows. Cofactor that activates the viral protease. Binds to viral protease in a 1:1 ratio. This is Pre-protein VI from Human adenovirus A serotype 12 (HAdV-12).